Consider the following 474-residue polypeptide: tRNA-2-methylthio-N(6)-dimethylallyladenosine synthase (474 aa).

An MTTase N-terminal domain is found at 3–120; that stretch reads KKLHIKTWGC…LPEMINAVRG (118 aa). The [4Fe-4S] cluster site is built by Cys-12, Cys-49, Cys-83, Cys-157, Cys-161, and Cys-164. The 233-residue stretch at 143 to 375 folds into the Radical SAM core domain; that stretch reads RADGPTAFVS…QERINQQAMA (233 aa). The TRAM domain maps to 378–441; it reads RRMLGTVQRI…TNSLRGKIVR (64 aa).

This sequence belongs to the methylthiotransferase family. MiaB subfamily. In terms of assembly, monomer. It depends on [4Fe-4S] cluster as a cofactor.

Its subcellular location is the cytoplasm. The enzyme catalyses N(6)-dimethylallyladenosine(37) in tRNA + (sulfur carrier)-SH + AH2 + 2 S-adenosyl-L-methionine = 2-methylsulfanyl-N(6)-dimethylallyladenosine(37) in tRNA + (sulfur carrier)-H + 5'-deoxyadenosine + L-methionine + A + S-adenosyl-L-homocysteine + 2 H(+). Functionally, catalyzes the methylthiolation of N6-(dimethylallyl)adenosine (i(6)A), leading to the formation of 2-methylthio-N6-(dimethylallyl)adenosine (ms(2)i(6)A) at position 37 in tRNAs that read codons beginning with uridine. In Klebsiella pneumoniae (strain 342), this protein is tRNA-2-methylthio-N(6)-dimethylallyladenosine synthase.